The primary structure comprises 367 residues: Germination protease (367 aa).

Residues 1-15 constitute a propeptide that is removed on maturation; sequence MKEPLDLSKYSIRTD.

This sequence belongs to the peptidase A25 family. As to quaternary structure, homotetramer. Post-translationally, autoproteolytically processed. The inactive tetrameric zymogen termed p46 autoprocesses to a smaller form termed p41, which is active only during spore germination.

The catalysed reaction is Endopeptidase action with P4 Glu or Asp, P1 preferably Glu &gt; Asp, P1' hydrophobic and P2' Ala.. In terms of biological role, initiates the rapid degradation of small, acid-soluble proteins during spore germination. This Bacillus cereus (strain ATCC 14579 / DSM 31 / CCUG 7414 / JCM 2152 / NBRC 15305 / NCIMB 9373 / NCTC 2599 / NRRL B-3711) protein is Germination protease.